The chain runs to 276 residues: Protease HtpX homolog (276 aa).

The chain crosses the membrane as a helical span at residues 16–36 (LFIWFGGMIAGQTGMVIAFLV). His130 serves as a coordination point for Zn(2+). Glu131 is a catalytic residue. His134 contributes to the Zn(2+) binding site. The next 2 membrane-spanning stretches (helical) occupy residues 142–162 (IGTVAATIAGAIAMLANFGMF) and 173–193 (IFVMLALMFIMPMAASIIQMT). Glu199 is a binding site for Zn(2+).

The protein belongs to the peptidase M48B family. Requires Zn(2+) as cofactor.

The protein resides in the cell inner membrane. The protein is Protease HtpX homolog of Sulfurovum sp. (strain NBC37-1).